The following is a 265-amino-acid chain: Glutamate racemase (265 aa).

Substrate is bound by residues 12–13 and 44–45; these read DS and YG. Residue Cys75 is the Proton donor/acceptor of the active site. 76 to 77 serves as a coordination point for substrate; the sequence is NT. Residue Cys186 is the Proton donor/acceptor of the active site. Residue 187 to 188 participates in substrate binding; it reads TH.

This sequence belongs to the aspartate/glutamate racemases family.

It carries out the reaction L-glutamate = D-glutamate. It participates in cell wall biogenesis; peptidoglycan biosynthesis. In terms of biological role, provides the (R)-glutamate required for cell wall biosynthesis. The chain is Glutamate racemase from Pseudomonas putida (strain ATCC 700007 / DSM 6899 / JCM 31910 / BCRC 17059 / LMG 24140 / F1).